The following is a 227-amino-acid chain: Octanoyltransferase (227 aa).

The region spanning 43–218 (ADSQDELWIV…TFTKTLGYQE (176 aa)) is the BPL/LPL catalytic domain. Substrate is bound by residues 82-89 (RGGQVTYH), 149-151 (SLG), and 162-164 (GLA). Cys-180 acts as the Acyl-thioester intermediate in catalysis.

It belongs to the LipB family.

The protein localises to the cytoplasm. It carries out the reaction octanoyl-[ACP] + L-lysyl-[protein] = N(6)-octanoyl-L-lysyl-[protein] + holo-[ACP] + H(+). It participates in protein modification; protein lipoylation via endogenous pathway; protein N(6)-(lipoyl)lysine from octanoyl-[acyl-carrier-protein]: step 1/2. Catalyzes the transfer of endogenously produced octanoic acid from octanoyl-acyl-carrier-protein onto the lipoyl domains of lipoate-dependent enzymes. Lipoyl-ACP can also act as a substrate although octanoyl-ACP is likely to be the physiological substrate. This Shewanella denitrificans (strain OS217 / ATCC BAA-1090 / DSM 15013) protein is Octanoyltransferase.